Consider the following 557-residue polypeptide: Polypyrimidine tract-binding protein 1 (557 aa).

At Met-1 the chain carries N-acetylmethionine. Residue Ser-16 is modified to Phosphoserine. 3 RRM domains span residues 59–143, 184–260, and 363–437; these read RVIH…SSPN, LRII…FSKL, and SVLL…LSKH. A Glycyl lysine isopeptide (Lys-Gly) (interchain with G-Cter in SUMO2) cross-link involves residue Lys-65. Tyr-127 carries the phosphotyrosine modification. A Phosphothreonine modification is found at Thr-138. Residue Ser-141 is modified to Phosphoserine. A Glycyl lysine isopeptide (Lys-Gly) (interchain with G-Cter in SUMO2) cross-link involves residue Lys-218. The tract at residues 437-460 is disordered; sequence HQSVQLPREGQEDQGLTKDYGNSP. Ser-459 is modified (phosphoserine). One can recognise an RRM 4 domain in the interval 480–555; sequence ATLHLSNIPP…HHLRVSFSKS (76 aa).

Monomer. Part of a ternary complex containing KHSRP, PTBP1, PTBP2 and HNRPH1. Interacts with RAVER1 and SFPQ.

The protein resides in the nucleus. Functionally, plays a role in pre-mRNA splicing and in the regulation of alternative splicing events. Activates exon skipping of its own pre-mRNA during muscle cell differentiation. Binds to the polypyrimidine tract of introns. May promote RNA looping when bound to two separate polypyrimidine tracts in the same pre-mRNA. May promote the binding of U2 snRNP to pre-mRNA. Cooperates with RAVER1 to modulate switching between mutually exclusive exons during maturation of the TPM1 pre-mRNA. Represses the splicing of MAPT/Tau exon 10. Binds to polypyrimidine-rich controlling element (PCE) of CFTR and promotes exon skipping of CFTR exon 9, thereby antagonizing TIA1 and its role in exon inclusion of CFTR exon 9. Plays a role in the splicing of pyruvate kinase PKM by binding repressively to a polypyrimidine tract flanking PKM exon 9, inhibiting exon 9 inclusion and resulting in exon 10 inclusion and production of the PKM M2 isoform. The chain is Polypyrimidine tract-binding protein 1 (PTBP1) from Bos taurus (Bovine).